A 350-amino-acid polypeptide reads, in one-letter code: ATPase GET3 (350 aa).

Lys26–Thr33 lines the ATP pocket. Asp57 is a catalytic residue. The ATP site is built by Glu243 and Asn270. Zn(2+) is bound by residues Cys282 and Cys285.

Belongs to the arsA ATPase family. Homodimer. Component of the Golgi to ER traffic (GET) complex, which is composed of GET1, GET2 and GET3. Within the complex, GET1 and GET2 form a heterotetramer which is stabilized by phosphatidylinositol binding and which binds to the GET3 homodimer. Interacts with the chloride channel protein GEF1.

Its subcellular location is the cytoplasm. The protein resides in the endoplasmic reticulum. It localises to the golgi apparatus. ATPase required for the post-translational delivery of tail-anchored (TA) proteins to the endoplasmic reticulum. Recognizes and selectively binds the transmembrane domain of TA proteins in the cytosol. This complex then targets to the endoplasmic reticulum by membrane-bound receptors GET1 and GET2, where the tail-anchored protein is released for insertion. This process is regulated by ATP binding and hydrolysis. ATP binding drives the homodimer towards the closed dimer state, facilitating recognition of newly synthesized TA membrane proteins. ATP hydrolysis is required for insertion. Subsequently, the homodimer reverts towards the open dimer state, lowering its affinity for the GET1-GET2 receptor, and returning it to the cytosol to initiate a new round of targeting. Cooperates with the HDEL receptor ERD2 to mediate the ATP-dependent retrieval of resident ER proteins that contain a C-terminal H-D-E-L retention signal from the Golgi to the ER. Involved in low-level resistance to the oxyanions arsenite and arsenate, and in heat tolerance. The protein is ATPase GET3 of Candida dubliniensis (strain CD36 / ATCC MYA-646 / CBS 7987 / NCPF 3949 / NRRL Y-17841) (Yeast).